Consider the following 483-residue polypeptide: 6-phosphogluconate dehydrogenase, decarboxylating (483 aa).

Residues 10–15 (GLAVMG) and 33–35 (NRT) each bind NADP(+). Position 38 is an N6-acetyllysine (Lys38). Phosphoserine is present on Ser57. NADP(+) is bound by residues 75–77 (VKA) and Asn103. Positions 103, 129, and 131 each coordinate substrate. Ser129 carries the phosphoserine modification. Lys184 functions as the Proton acceptor in the catalytic mechanism. A substrate-binding site is contributed by 187–188 (HN). Residue Glu191 is the Proton donor of the active site. Tyr192, Lys261, Arg288, Arg447, and His453 together coordinate substrate. Residue 478–481 (SSSY) coordinates NADP(+).

The protein belongs to the 6-phosphogluconate dehydrogenase family. As to quaternary structure, homodimer.

It localises to the cytoplasm. The enzyme catalyses 6-phospho-D-gluconate + NADP(+) = D-ribulose 5-phosphate + CO2 + NADPH. It functions in the pathway carbohydrate degradation; pentose phosphate pathway; D-ribulose 5-phosphate from D-glucose 6-phosphate (oxidative stage): step 3/3. Catalyzes the oxidative decarboxylation of 6-phosphogluconate to ribulose 5-phosphate and CO(2), with concomitant reduction of NADP to NADPH. The chain is 6-phosphogluconate dehydrogenase, decarboxylating (PGD) from Ovis aries (Sheep).